Consider the following 403-residue polypeptide: S-adenosylmethionine synthase (403 aa).

H15 contributes to the ATP binding site. A Mg(2+)-binding site is contributed by D17. E43 serves as a coordination point for K(+). Positions 56 and 99 each coordinate L-methionine. The tract at residues 99–109 (QSPDINQGVDR) is flexible loop. ATP contacts are provided by residues 166–168 (DAK), 232–233 (KF), D241, 247–248 (RK), A264, and K268. D241 contributes to the L-methionine binding site. An L-methionine-binding site is contributed by K272.

This sequence belongs to the AdoMet synthase family. In terms of assembly, homotetramer; dimer of dimers. Mg(2+) is required as a cofactor. Requires K(+) as cofactor.

The protein localises to the cytoplasm. The catalysed reaction is L-methionine + ATP + H2O = S-adenosyl-L-methionine + phosphate + diphosphate. Its pathway is amino-acid biosynthesis; S-adenosyl-L-methionine biosynthesis; S-adenosyl-L-methionine from L-methionine: step 1/1. In terms of biological role, catalyzes the formation of S-adenosylmethionine (AdoMet) from methionine and ATP. The overall synthetic reaction is composed of two sequential steps, AdoMet formation and the subsequent tripolyphosphate hydrolysis which occurs prior to release of AdoMet from the enzyme. This Xylella fastidiosa (strain Temecula1 / ATCC 700964) protein is S-adenosylmethionine synthase.